The primary structure comprises 147 residues: Protein LOL1 (147 aa).

A disordered region spans residues Met1 to Ser38. Residues Ser22–Ser38 show a composition bias toward polar residues. Positions Gln47 to Val77 are putative zinc finger.

Its subcellular location is the nucleus. Functionally, putative zinc finger that may be involved in programmed cell death and defense response. This chain is Protein LOL1 (LOL1), found in Oryza sativa subsp. japonica (Rice).